We begin with the raw amino-acid sequence, 348 residues long: Centromere protein N-B (348 aa).

It belongs to the CENP-N/CHL4 family.

It is found in the nucleus. The protein resides in the chromosome. It localises to the centromere. Probable component of a centromeric complex involved in assembly of kinetochore proteins, mitotic progression and chromosome segregation. This Xenopus laevis (African clawed frog) protein is Centromere protein N-B (cenpn-b).